The sequence spans 118 residues: MNINICGVLISKKKNIVFGLTKIYGIGYSMSLKICSKIENFKNKKFKDLTNEEKAKIENFINKINVENNLKTIIKENFKKKLNLNSYKSLRHKKKLPCRGQRTKTNAKTRKKMNHEII.

Belongs to the universal ribosomal protein uS13 family. As to quaternary structure, part of the 30S ribosomal subunit. Forms a loose heterodimer with protein S19. Forms two bridges to the 50S subunit in the 70S ribosome.

Located at the top of the head of the 30S subunit, it contacts several helices of the 16S rRNA. In the 70S ribosome it contacts the 23S rRNA (bridge B1a) and protein L5 of the 50S subunit (bridge B1b), connecting the 2 subunits; these bridges are implicated in subunit movement. Contacts the tRNAs in the A and P-sites. The polypeptide is Small ribosomal subunit protein uS13 (Carsonella ruddii (strain PV)).